The primary structure comprises 252 residues: Trypsin iota (252 aa).

The N-terminal stretch at Met-1–Ala-19 is a signal peptide. A propeptide spans Ser-20–Arg-27 (activation peptide). A Peptidase S1 domain is found at Ile-28–Asn-250. Cysteines 53 and 69 form a disulfide. Residues His-68 and Asp-113 each act as charge relay system in the active site. Disulfide bonds link Cys-175/Cys-193 and Cys-202/Cys-226. The active-site Charge relay system is the Ser-206.

The protein belongs to the peptidase S1 family.

It is found in the secreted. The protein resides in the extracellular space. It carries out the reaction Preferential cleavage: Arg-|-Xaa, Lys-|-Xaa.. The chain is Trypsin iota (iotaTry) from Drosophila melanogaster (Fruit fly).